The sequence spans 290 residues: Lipoyl synthase (290 aa).

Cys38, Cys43, Cys49, Cys64, Cys68, Cys71, and Ser277 together coordinate [4Fe-4S] cluster. The Radical SAM core domain maps to 50–266; sequence WSKGTATFLL…REIALDAGFR (217 aa).

This sequence belongs to the radical SAM superfamily. Lipoyl synthase family. The cofactor is [4Fe-4S] cluster.

The protein resides in the cytoplasm. It carries out the reaction [[Fe-S] cluster scaffold protein carrying a second [4Fe-4S](2+) cluster] + N(6)-octanoyl-L-lysyl-[protein] + 2 oxidized [2Fe-2S]-[ferredoxin] + 2 S-adenosyl-L-methionine + 4 H(+) = [[Fe-S] cluster scaffold protein] + N(6)-[(R)-dihydrolipoyl]-L-lysyl-[protein] + 4 Fe(3+) + 2 hydrogen sulfide + 2 5'-deoxyadenosine + 2 L-methionine + 2 reduced [2Fe-2S]-[ferredoxin]. Its pathway is protein modification; protein lipoylation via endogenous pathway; protein N(6)-(lipoyl)lysine from octanoyl-[acyl-carrier-protein]: step 2/2. Functionally, catalyzes the radical-mediated insertion of two sulfur atoms into the C-6 and C-8 positions of the octanoyl moiety bound to the lipoyl domains of lipoate-dependent enzymes, thereby converting the octanoylated domains into lipoylated derivatives. In Chlorobaculum tepidum (strain ATCC 49652 / DSM 12025 / NBRC 103806 / TLS) (Chlorobium tepidum), this protein is Lipoyl synthase.